We begin with the raw amino-acid sequence, 68 residues long: Pantinin-3 (68 aa).

Residues 1-23 form the signal peptide; the sequence is MKTQFAILLIALVLFQLLSQSDA. At leucine 36 the chain carries Leucine amide. Positions 40–68 are excised as a propeptide; the sequence is GLNELDNLDELFDGEISQADIDFLKELMS.

This sequence belongs to the non-disulfide-bridged peptide (NDBP) superfamily. Short antimicrobial peptide (group 4) family. As to expression, expressed by the venom gland.

The protein resides in the secreted. It is found in the target cell membrane. Functionally, amphipathic peptide that possesses relatively strong activities against Gram-positive bacteria and a fungus, but has very weak antimicrobial activities against Gram-negative bacteria. Also exhibits mild hemolytic activities against human erythrocytes (16 uM induce 70% of hemolysis). Furthermore, this peptide potently inhibits the growth of vancomycin-resistant Enterococcus (VRE) S13, a pathogen that can cause a number of human infections. Minimal inhibitory concentration (MIC) are the following: 16 uM against S.aureus, 6 uM against B.magaterium, 8 uM against M.luteus, 4 uM against VRE, 12 uM against methicillin-resistant S.aureus, 36 uM against E.coli, &gt;87 uM against P.putida, 87 uM against K.oxytoca, &gt;87 uM against E.cloacae, 84 uM against S.enterica and 17 uM against the fungus C.tropicalis. The polypeptide is Pantinin-3 (Pandinus imperator (Emperor scorpion)).